The sequence spans 876 residues: Eukaryotic translation initiation factor 3 subunit C (876 aa).

Disordered regions lie at residues 1-25 (MSRF…VVRA) and 154-233 (SXFR…IREQ). Over residues 11 to 20 (SESESSSEDE) the composition is skewed to acidic residues. 2 stretches are compositionally biased toward basic and acidic residues: residues 154–172 (SXFR…KDSS) and 182–192 (KPIKEKPKPEP). The span at 206–219 (SMDWASSSSDSSFS) shows a compositional bias: low complexity. The region spanning 632–808 (FHMHINLELL…ECAILHRSEP (177 aa)) is the PCI domain. The segment at 839–876 (FFQRGGAQRGEGRQRERPREGWNRRTRNRRRDDERADD) is disordered. The segment covering 848 to 861 (GEGRQRERPREGWN) has biased composition (basic and acidic residues).

This sequence belongs to the eIF-3 subunit C family. In terms of assembly, component of the eukaryotic translation initiation factor 3 (eIF-3) complex.

It localises to the cytoplasm. Component of the eukaryotic translation initiation factor 3 (eIF-3) complex, which is involved in protein synthesis of a specialized repertoire of mRNAs and, together with other initiation factors, stimulates binding of mRNA and methionyl-tRNAi to the 40S ribosome. The eIF-3 complex specifically targets and initiates translation of a subset of mRNAs involved in cell proliferation. The sequence is that of Eukaryotic translation initiation factor 3 subunit C from Bombyx mori (Silk moth).